A 78-amino-acid polypeptide reads, in one-letter code: NAD(P)H-quinone oxidoreductase subunit O (78 aa).

It belongs to the complex I NdhO subunit family. In terms of assembly, NDH-1 can be composed of about 15 different subunits; different subcomplexes with different compositions have been identified which probably have different functions.

The protein resides in the cell inner membrane. It carries out the reaction a plastoquinone + NADH + (n+1) H(+)(in) = a plastoquinol + NAD(+) + n H(+)(out). The catalysed reaction is a plastoquinone + NADPH + (n+1) H(+)(in) = a plastoquinol + NADP(+) + n H(+)(out). In terms of biological role, NDH-1 shuttles electrons from an unknown electron donor, via FMN and iron-sulfur (Fe-S) centers, to quinones in the respiratory and/or the photosynthetic chain. The immediate electron acceptor for the enzyme in this species is believed to be plastoquinone. Couples the redox reaction to proton translocation, and thus conserves the redox energy in a proton gradient. Cyanobacterial NDH-1 also plays a role in inorganic carbon-concentration. The sequence is that of NAD(P)H-quinone oxidoreductase subunit O from Gloeobacter violaceus (strain ATCC 29082 / PCC 7421).